A 209-amino-acid chain; its full sequence is MGKFTVLNHPLIQHKLTIIRRKETGSNEFRRIVGEIAGLMTYEITRDLPLQDVEIETPMGKTVQKELAGKKLTIVPILRAGMGMVNGVLEMIPSAKVGVVGMYRDEETLKPVEYFFKVPKDVTERECLVVDPMLATGGSANLAIEALKKRGVTDIKLAVLVAAPEGVKAVQDEHPDVDIYAAALDDKLLPNGYIFPGLGDAGDRIFGTK.

Residues R79, R104, and 131-139 each bind 5-phospho-alpha-D-ribose 1-diphosphate; that span reads DPMLATGGS. Uracil-binding positions include I194 and 199–201; that span reads GDA. Residue D200 coordinates 5-phospho-alpha-D-ribose 1-diphosphate.

The protein belongs to the UPRTase family. The cofactor is Mg(2+).

The enzyme catalyses UMP + diphosphate = 5-phospho-alpha-D-ribose 1-diphosphate + uracil. Its pathway is pyrimidine metabolism; UMP biosynthesis via salvage pathway; UMP from uracil: step 1/1. With respect to regulation, allosterically activated by GTP. In terms of biological role, catalyzes the conversion of uracil and 5-phospho-alpha-D-ribose 1-diphosphate (PRPP) to UMP and diphosphate. The sequence is that of Uracil phosphoribosyltransferase from Lactobacillus delbrueckii subsp. bulgaricus (strain ATCC 11842 / DSM 20081 / BCRC 10696 / JCM 1002 / NBRC 13953 / NCIMB 11778 / NCTC 12712 / WDCM 00102 / Lb 14).